The chain runs to 225 residues: UPF0758 protein BCQ_4241 (225 aa).

An MPN domain is found at 103–225; it reads SIRSPEDCAR…FVSLKEKGHI (123 aa). Residues His-174, His-176, and Asp-187 each coordinate Zn(2+). The short motif at 174 to 187 is the JAMM motif element; it reads HNHPSGDPAPSRED.

The protein belongs to the UPF0758 family.

The chain is UPF0758 protein BCQ_4241 from Bacillus cereus (strain Q1).